Consider the following 120-residue polypeptide: Aspartate 1-decarboxylase (120 aa).

Ser25 functions as the Schiff-base intermediate with substrate; via pyruvic acid in the catalytic mechanism. Pyruvic acid (Ser) is present on Ser25. Thr57 contacts substrate. The active-site Proton donor is the Tyr58. 72–74 lines the substrate pocket; it reads GAA.

The protein belongs to the PanD family. Heterooctamer of four alpha and four beta subunits. Pyruvate serves as cofactor. In terms of processing, is synthesized initially as an inactive proenzyme, which is activated by self-cleavage at a specific serine bond to produce a beta-subunit with a hydroxyl group at its C-terminus and an alpha-subunit with a pyruvoyl group at its N-terminus.

Its subcellular location is the cytoplasm. It carries out the reaction L-aspartate + H(+) = beta-alanine + CO2. It functions in the pathway cofactor biosynthesis; (R)-pantothenate biosynthesis; beta-alanine from L-aspartate: step 1/1. In terms of biological role, catalyzes the pyruvoyl-dependent decarboxylation of aspartate to produce beta-alanine. This is Aspartate 1-decarboxylase from Helicobacter hepaticus (strain ATCC 51449 / 3B1).